The sequence spans 417 residues: Serine hydroxymethyltransferase (417 aa).

(6S)-5,6,7,8-tetrahydrofolate contacts are provided by residues Leu-121 and 125 to 127 (GHL). Lys-229 carries the post-translational modification N6-(pyridoxal phosphate)lysine. Residue 355–357 (SPF) participates in (6S)-5,6,7,8-tetrahydrofolate binding.

This sequence belongs to the SHMT family. As to quaternary structure, homodimer. Requires pyridoxal 5'-phosphate as cofactor.

It localises to the cytoplasm. It carries out the reaction (6R)-5,10-methylene-5,6,7,8-tetrahydrofolate + glycine + H2O = (6S)-5,6,7,8-tetrahydrofolate + L-serine. Its pathway is one-carbon metabolism; tetrahydrofolate interconversion. It functions in the pathway amino-acid biosynthesis; glycine biosynthesis; glycine from L-serine: step 1/1. Functionally, catalyzes the reversible interconversion of serine and glycine with tetrahydrofolate (THF) serving as the one-carbon carrier. This reaction serves as the major source of one-carbon groups required for the biosynthesis of purines, thymidylate, methionine, and other important biomolecules. Also exhibits THF-independent aldolase activity toward beta-hydroxyamino acids, producing glycine and aldehydes, via a retro-aldol mechanism. The sequence is that of Serine hydroxymethyltransferase from Xanthomonas oryzae pv. oryzae (strain MAFF 311018).